Consider the following 308-residue polypeptide: Ribonuclease HIII (308 aa).

Residues phenylalanine 88–glutamine 304 form the RNase H type-2 domain. 3 residues coordinate a divalent metal cation: aspartate 94, glutamate 95, and aspartate 199.

It belongs to the RNase HII family. RnhC subfamily. Mn(2+) is required as a cofactor. The cofactor is Mg(2+).

The protein localises to the cytoplasm. The catalysed reaction is Endonucleolytic cleavage to 5'-phosphomonoester.. Its function is as follows. Endonuclease that specifically degrades the RNA of RNA-DNA hybrids. The chain is Ribonuclease HIII from Staphylococcus epidermidis (strain ATCC 35984 / DSM 28319 / BCRC 17069 / CCUG 31568 / BM 3577 / RP62A).